The following is a 430-amino-acid chain: Adenylosuccinate synthetase (430 aa).

GTP is bound by residues 12–18 (GDEGKGK) and 40–42 (GHT). Catalysis depends on Asp13, which acts as the Proton acceptor. Mg(2+) is bound by residues Asp13 and Gly40. IMP-binding positions include 13–16 (DEGK), 38–41 (NAGH), Thr128, Arg142, Gln223, Thr238, and Arg302. The active-site Proton donor is the His41. 298-304 (VNTGRTR) contacts substrate. GTP contacts are provided by residues Arg304, 330-332 (KLD), and 412-414 (GVG).

The protein belongs to the adenylosuccinate synthetase family. In terms of assembly, homodimer. It depends on Mg(2+) as a cofactor.

The protein resides in the cytoplasm. The enzyme catalyses IMP + L-aspartate + GTP = N(6)-(1,2-dicarboxyethyl)-AMP + GDP + phosphate + 2 H(+). It functions in the pathway purine metabolism; AMP biosynthesis via de novo pathway; AMP from IMP: step 1/2. Its function is as follows. Plays an important role in the de novo pathway of purine nucleotide biosynthesis. Catalyzes the first committed step in the biosynthesis of AMP from IMP. In Corynebacterium ammoniagenes (Brevibacterium ammoniagenes), this protein is Adenylosuccinate synthetase.